A 218-amino-acid chain; its full sequence is Capsid protein (218 aa).

Met-1 carries the N-acetylmethionine; by host modification. Positions 1 to 28 are disordered; that stretch reads MDKSESTGAGRNRRRRPRRGSRSAPSSA. The span at 11 to 21 shows a compositional bias: basic residues; that stretch reads RNRRRRPRRGS.

Belongs to the cucumovirus capsid protein family.

The protein localises to the virion. Its function is as follows. Capsid protein. Probably binds RNA and plays a role in packaging. This Cucumis sativus (Cucumber) protein is Capsid protein.